Consider the following 799-residue polypeptide: Protein ADP-ribosyltransferase PARP3 (799 aa).

A compositionally biased stretch (basic and acidic residues) spans 1–49 (MKVESRSHNVHHAHGEEEKVMTRKQKAESKAHEVEHSPKKAKVEDEKNG). A disordered region spans residues 1-55 (MKVESRSHNVHHAHGEEEKVMTRKQKAESKAHEVEHSPKKAKVEDEKNGHTNGKS). A PADR1 zinc-binding domain is found at 39-188 (KKAKVEDEKN…QRDLGLAIKP (150 aa)). The region spanning 71–105 (NEQLSLEQMKEILEANDLDSSGSDLEITRRCQDLL) is the SAP domain. The segment at 108-152 (GALEKCMVCNGNMEFDGRRYGCRGFYSEWSSCTFSTREPPRKDEP) is zinc ribbon. Zn(2+) contacts are provided by cysteine 113, cysteine 116, cysteine 129, and cysteine 139. Residues 140–161 (TFSTREPPRKDEPIKLPDSVQN) are disordered. Over residues 145 to 154 (EPPRKDEPIK) the composition is skewed to basic and acidic residues. A BRCT domain is found at 189–261 (FTGMMISLMG…EPQPLESYDL (73 aa)). Residues 309–409 (DGKIFEKDGI…KKFQKKPLKF (101 aa)) form the WGR domain. Residues 436-555 (HCKLEPMVAN…DITLASHLIG (120 aa)) form the PARP alpha-helical domain. In terms of domain architecture, PARP catalytic spans 564–795 (DPLSDTYKKL…VKYEEKDAVI (232 aa)).

It belongs to the ARTD/PARP family.

It is found in the nucleus. It carries out the reaction L-aspartyl-[protein] + NAD(+) = 4-O-(ADP-D-ribosyl)-L-aspartyl-[protein] + nicotinamide. The enzyme catalyses L-glutamyl-[protein] + NAD(+) = 5-O-(ADP-D-ribosyl)-L-glutamyl-[protein] + nicotinamide. Its function is as follows. Involved in the base excision repair (BER) pathway, by catalyzing the poly(ADP-ribosyl)ation of a limited number of acceptor proteins involved in chromatin architecture and in DNA metabolism. This modification follows DNA damages and appears as an obligatory step in a detection/signaling pathway leading to the reparation of DNA strand breaks. This is Protein ADP-ribosyltransferase PARP3 (PARP3) from Medicago truncatula (Barrel medic).